A 98-amino-acid polypeptide reads, in one-letter code: NADH-ubiquinone oxidoreductase chain 4L (98 aa).

Helical transmembrane passes span Met-1–Met-21, Ser-29–Leu-49, and Ile-61–Ile-81.

Belongs to the complex I subunit 4L family. In terms of assembly, core subunit of respiratory chain NADH dehydrogenase (Complex I) which is composed of 45 different subunits.

It is found in the mitochondrion inner membrane. It carries out the reaction a ubiquinone + NADH + 5 H(+)(in) = a ubiquinol + NAD(+) + 4 H(+)(out). Its function is as follows. Core subunit of the mitochondrial membrane respiratory chain NADH dehydrogenase (Complex I) which catalyzes electron transfer from NADH through the respiratory chain, using ubiquinone as an electron acceptor. Part of the enzyme membrane arm which is embedded in the lipid bilayer and involved in proton translocation. This Vicugna pacos (Alpaca) protein is NADH-ubiquinone oxidoreductase chain 4L (MT-ND4L).